The primary structure comprises 287 residues: 4-hydroxybenzoate octaprenyltransferase (287 aa).

5 helical membrane passes run 20 to 38, 95 to 115, 211 to 231, 235 to 255, and 266 to 286; these read IGTL…FAAG, IVFL…NPLV, IIAA…LIAE, IYGG…KLIF, and FLNN…DYLV.

It belongs to the UbiA prenyltransferase family. It depends on Mg(2+) as a cofactor.

The protein resides in the cell inner membrane. It carries out the reaction all-trans-octaprenyl diphosphate + 4-hydroxybenzoate = 4-hydroxy-3-(all-trans-octaprenyl)benzoate + diphosphate. The protein operates within cofactor biosynthesis; ubiquinone biosynthesis. Catalyzes the prenylation of para-hydroxybenzoate (PHB) with an all-trans polyprenyl group. Mediates the second step in the final reaction sequence of ubiquinone-8 (UQ-8) biosynthesis, which is the condensation of the polyisoprenoid side chain with PHB, generating the first membrane-bound Q intermediate 3-octaprenyl-4-hydroxybenzoate. The protein is 4-hydroxybenzoate octaprenyltransferase of Shewanella piezotolerans (strain WP3 / JCM 13877).